A 383-amino-acid polypeptide reads, in one-letter code: Trichodiene synthase (383 aa).

It belongs to the trichodiene synthase family.

The catalysed reaction is (2E,6E)-farnesyl diphosphate = trichodiene + diphosphate. It participates in sesquiterpene biosynthesis; trichothecene biosynthesis. Functionally, TS is a member of the terpene cyclase group of enzymes. It catalyzes the isomerization and cyclization of farnesyl pyro-phosphate to form trichodiene, the first cyclic intermediate in the biosynthetic pathway for trichothecenes. It serves to branch trichothecene biosynthesis from the isoprenoid pathway. The polypeptide is Trichodiene synthase (TRI5) (Stachybotrys chartarum (Toxic black mold)).